We begin with the raw amino-acid sequence, 34 residues long: Subtilosin-A (34 aa).

Positions 1–34 (NKGCATCSIGIACLVDGPIPDFECAGATGLGLWG) form a cross-link, cyclopeptide (Asn-Gly). Residues 7 to 28 (CSIGIACLVDGPIPDFECAGAT) constitute a cross-link (2-cysteinyl-D-allo-threonine (Cys-Thr)). The segment at residues 13-22 (CLVDGPIPDF) is a cross-link (2-cysteinyl-L-phenylalanine (Cys-Phe)).

The protein belongs to the bacteriocin class V family. In terms of processing, alpha-amino of Asn-1 is covalently linked with the carboxyl of Gly-34 to form a cyclopeptide. Thioether cross-links are formed between cysteines and the alpha-carbons of other amino acids, Cys-7 to Thr-28 and Cys-13 to Phe-22. In forming this cross-link, Thr-28 is converted to D-amino acid.

The protein localises to the secreted. Has bactericidal activity against some Gram-positive bacteria. This Cytobacillus firmus (Bacillus firmus) protein is Subtilosin-A.